The chain runs to 894 residues: DNA mismatch repair protein MutS (894 aa).

632–639 is an ATP binding site; that stretch reads GPNMGGKS.

This sequence belongs to the DNA mismatch repair MutS family.

Its function is as follows. This protein is involved in the repair of mismatches in DNA. It is possible that it carries out the mismatch recognition step. This protein has a weak ATPase activity. The chain is DNA mismatch repair protein MutS from Paraburkholderia phytofirmans (strain DSM 17436 / LMG 22146 / PsJN) (Burkholderia phytofirmans).